Consider the following 140-residue polypeptide: Seminal plasma protein A3 (140 aa).

A signal peptide spans 1–25; that stretch reads MALRLGLFLIWAGVSMFLQLDPVNG. Fibronectin type-II domains follow at residues 49–93 and 94–140; these read TKDN…YCTK and NDYA…WKYC. 4 disulfide bridges follow: C54–C78, C68–C91, C99–C125, and C113–C140.

Belongs to the seminal plasma protein family.

The protein localises to the secreted. Its function is as follows. The BSP-A proteins from seminal plasma exhibit both simulatory and inhibitory actions on the release of pituitary gonadotropins. The exact function of these proteins is not known. In Bos taurus (Bovine), this protein is Seminal plasma protein A3.